Consider the following 251-residue polypeptide: Ubiquinone/menaquinone biosynthesis C-methyltransferase UbiE (251 aa).

Residues Thr-74, Asp-95, and 123-124 (NA) contribute to the S-adenosyl-L-methionine site.

This sequence belongs to the class I-like SAM-binding methyltransferase superfamily. MenG/UbiE family.

It carries out the reaction a 2-demethylmenaquinol + S-adenosyl-L-methionine = a menaquinol + S-adenosyl-L-homocysteine + H(+). The catalysed reaction is a 2-methoxy-6-(all-trans-polyprenyl)benzene-1,4-diol + S-adenosyl-L-methionine = a 5-methoxy-2-methyl-3-(all-trans-polyprenyl)benzene-1,4-diol + S-adenosyl-L-homocysteine + H(+). It functions in the pathway quinol/quinone metabolism; menaquinone biosynthesis; menaquinol from 1,4-dihydroxy-2-naphthoate: step 2/2. Its pathway is cofactor biosynthesis; ubiquinone biosynthesis. Functionally, methyltransferase required for the conversion of demethylmenaquinol (DMKH2) to menaquinol (MKH2) and the conversion of 2-polyprenyl-6-methoxy-1,4-benzoquinol (DDMQH2) to 2-polyprenyl-3-methyl-6-methoxy-1,4-benzoquinol (DMQH2). In Erwinia tasmaniensis (strain DSM 17950 / CFBP 7177 / CIP 109463 / NCPPB 4357 / Et1/99), this protein is Ubiquinone/menaquinone biosynthesis C-methyltransferase UbiE.